The chain runs to 104 residues: Large ribosomal subunit protein uL24 (104 aa).

The protein belongs to the universal ribosomal protein uL24 family. In terms of assembly, part of the 50S ribosomal subunit.

Functionally, one of two assembly initiator proteins, it binds directly to the 5'-end of the 23S rRNA, where it nucleates assembly of the 50S subunit. In terms of biological role, one of the proteins that surrounds the polypeptide exit tunnel on the outside of the subunit. The sequence is that of Large ribosomal subunit protein uL24 from Afipia carboxidovorans (strain ATCC 49405 / DSM 1227 / KCTC 32145 / OM5) (Oligotropha carboxidovorans).